The primary structure comprises 361 residues: Alanine racemase (361 aa).

The active-site Proton acceptor; specific for D-alanine is the lysine 35. An N6-(pyridoxal phosphate)lysine modification is found at lysine 35. Arginine 132 is a substrate binding site. The active-site Proton acceptor; specific for L-alanine is tyrosine 257. Residue methionine 305 participates in substrate binding.

The protein belongs to the alanine racemase family. Pyridoxal 5'-phosphate is required as a cofactor.

The enzyme catalyses L-alanine = D-alanine. It functions in the pathway amino-acid biosynthesis; D-alanine biosynthesis; D-alanine from L-alanine: step 1/1. Its function is as follows. Catalyzes the interconversion of L-alanine and D-alanine. May also act on other amino acids. The polypeptide is Alanine racemase (alr) (Thioalkalivibrio sulfidiphilus (strain HL-EbGR7)).